The chain runs to 396 residues: MSRPQQITVLGATGSIGLSTLDVIARHPDRYQAFALSGFTRLSELFALCVRHLPEYAVVPEAGAARNLQDDLRAAGLSTQVLVGEEGLCQVAAAPEVDAVMAAIVGAAGLRPTLAAVEAGKKILLANKEALVMSGALFMQAVRKSGSVLLPIDSEHNAIFQCMPQDFARGLSNVGVRRILLTASGGPFRQTPMAELAHVSPDQACAHPNWSMGRKISVDSASMMNKGLELIEACWLFDAKPSQVEVVIHPQSVIHSLVDYVDGSVLAQLGNPDMRTPIANALAWPERIDSGVAPLDLFAVARLDFEAPDEERFPCLRLARQAAEAGNSAPAMLNAANEVAVAAFLDGRVRYLEIASIIEEVLNLEPVVALDNLDAVFAADATARTLAGQWLSRNGR.

Thr13, Gly14, Ser15, Ile16, and Asn127 together coordinate NADPH. Lys128 serves as a coordination point for 1-deoxy-D-xylulose 5-phosphate. Glu129 lines the NADPH pocket. Asp153 contributes to the Mn(2+) binding site. 1-deoxy-D-xylulose 5-phosphate contacts are provided by Ser154, Glu155, Ser184, and His207. Glu155 is a Mn(2+) binding site. Residue Gly213 coordinates NADPH. Residues Ser220, Asn225, Lys226, and Glu229 each contribute to the 1-deoxy-D-xylulose 5-phosphate site. Glu229 provides a ligand contact to Mn(2+).

It belongs to the DXR family. Requires Mg(2+) as cofactor. It depends on Mn(2+) as a cofactor.

It catalyses the reaction 2-C-methyl-D-erythritol 4-phosphate + NADP(+) = 1-deoxy-D-xylulose 5-phosphate + NADPH + H(+). Its pathway is isoprenoid biosynthesis; isopentenyl diphosphate biosynthesis via DXP pathway; isopentenyl diphosphate from 1-deoxy-D-xylulose 5-phosphate: step 1/6. Its function is as follows. Catalyzes the NADPH-dependent rearrangement and reduction of 1-deoxy-D-xylulose-5-phosphate (DXP) to 2-C-methyl-D-erythritol 4-phosphate (MEP). This is 1-deoxy-D-xylulose 5-phosphate reductoisomerase from Pseudomonas fluorescens (strain Pf0-1).